Consider the following 839-residue polypeptide: Flocculation protein FLO11 (839 aa).

An N-terminal signal peptide occupies residues 1 to 22 (MVSLRSIFTSSILAAGLTRAHG). Positions 24 to 194 (SGKTCPTSEV…PKKCSSDCGV (171 aa)) constitute a Flo11 1 domain. 4 disulfides stabilise this stretch: cysteine 28–cysteine 188, cysteine 37–cysteine 167, cysteine 129–cysteine 192, and cysteine 143–cysteine 152. The N-linked (GlcNAc...) asparagine glycan is linked to asparagine 79. Residues 187–342 (KCSSDCGVEP…GPTCPTSEVS (156 aa)) are disordered. Residues 198 to 317 (TSDEPEEPTT…EPTTSEEPEE (120 aa)) show a composition bias toward acidic residues. Positions 332 to 502 (EGPTCPTSEV…PKKCSSNCGV (171 aa)) constitute a Flo11 2 domain. A glycan (N-linked (GlcNAc...) asparagine) is linked at asparagine 387. Residues 496–606 (CSSNCGVEPT…LVPTTKTETD (111 aa)) form a disordered region. The segment covering 506-592 (TSDEPEEPTT…PTTSDEEPGT (87 aa)) has biased composition (acidic residues). Low complexity predominate over residues 593-606 (TEEPLVPTTKTETD).

It belongs to the flocculin family. Highly divergent.

Homophilic binding protein that enables kin discrimination in heterogeneous yeast populations by mediating homotypic cell-cell interactions during flocculation, a reversible and asexual process in which cells adhere to form aggregates (flocs). The sequence is that of Flocculation protein FLO11 from Komagataella phaffii (strain GS115 / ATCC 20864) (Yeast).